We begin with the raw amino-acid sequence, 249 residues long: Triosephosphate isomerase (249 aa).

Position 9 to 11 (9 to 11) interacts with substrate; the sequence is NWK. His95 functions as the Electrophile in the catalytic mechanism. Glu167 serves as the catalytic Proton acceptor. Substrate contacts are provided by residues Gly173, Ser213, and 234 to 235; that span reads GG.

The protein belongs to the triosephosphate isomerase family. Homodimer.

It localises to the cytoplasm. It catalyses the reaction D-glyceraldehyde 3-phosphate = dihydroxyacetone phosphate. It functions in the pathway carbohydrate biosynthesis; gluconeogenesis. The protein operates within carbohydrate degradation; glycolysis; D-glyceraldehyde 3-phosphate from glycerone phosphate: step 1/1. In terms of biological role, involved in the gluconeogenesis. Catalyzes stereospecifically the conversion of dihydroxyacetone phosphate (DHAP) to D-glyceraldehyde-3-phosphate (G3P). The protein is Triosephosphate isomerase of Dictyoglomus turgidum (strain DSM 6724 / Z-1310).